The following is a 705-amino-acid chain: Dolichyl-diphosphooligosaccharide--protein glycosyltransferase subunit STT3A (705 aa).

Residues 1 to 15 lie on the Cytoplasmic side of the membrane; sequence MTKLGFLRLSYEKQD. A helical transmembrane segment spans residues 16–34; sequence TLLKLLILSMAAVLSFSTR. The Lumenal portion of the chain corresponds to 35 to 111; it reads LFAVLRFESV…VLHFFHITID (77 aa). The DXD motif 1 motif lies at 47–49; the sequence is EFD. Residue Asp49 coordinates Mn(2+). Residues 112–141 form a helical membrane-spanning segment; it reads IRNVCVFLAPLFSSFTTIVTYHLTKELKDA. Residue Gly142 is a topological domain, cytoplasmic. A helical membrane pass occupies residues 143–158; the sequence is AGLLAAAMIAVVPGYI. Topologically, residues 159-170 are lumenal; sequence SRSVAGSYDNEG. Residues Asp167 and Glu169 each coordinate Mn(2+). A DXD motif 2 motif is present at residues 167–169; sequence DNE. The helical transmembrane segment at 171–188 threads the bilayer; the sequence is IAIFCMLLTYYMWIKAVK. Over 189–191 the chain is Cytoplasmic; sequence TGS. Residues 192–207 form a helical membrane-spanning segment; sequence IYWAAKCALAYFYMVS. Topologically, residues 208–210 are lumenal; sequence SWG. The helical transmembrane segment at 211 to 229 threads the bilayer; it reads GYVFLINLIPLHVLVLMLT. At 230–234 the chain is on the cytoplasmic side; that stretch reads GRFSH. A helical transmembrane segment spans residues 235–253; that stretch reads RIYVAYCTVYCLGTILSMQ. The Lumenal segment spans residues 254-265; the sequence is ISFVGFQPVLSS. Residues 266-283 traverse the membrane as a helical segment; that stretch reads EHMAAFGVFGLCQIHAFV. Topologically, residues 284-298 are cytoplasmic; the sequence is DYLRSKLNPQQFEVL. A helical membrane pass occupies residues 299–317; sequence FRSVISLVGFVLLTVGALL. Topologically, residues 318-356 are lumenal; it reads MLTGKISPWTGRFYSLLDPSYAKNNIPIIASVSEHQPTT. The SVSE motif motif lies at 348–351; the sequence is SVSE. Residues 357–379 traverse the membrane as a helical segment; it reads WSSYYFDLQLLVFMFPVGLYYCF. Over 380 to 385 the chain is Cytoplasmic; sequence SNLSDA. A helical transmembrane segment spans residues 386–402; that stretch reads RIFIIMYGVTSMYFSAV. Residues 403–406 lie on the Lumenal side of the membrane; it reads MVRL. Arg405 serves as a coordination point for dolichyl diphosphooligosaccharide. A helical transmembrane segment spans residues 407 to 428; that stretch reads MLVLAPVMCILSGIGVSQVLST. At 429–453 the chain is on the cytoplasmic side; sequence YMKNLDISRPDKKSKKQQDSTYPIK. Residues 454 to 473 traverse the membrane as a helical segment; it reads NEVASGMILVMAFFLITYTF. Topologically, residues 474-705 are lumenal; sequence HSTWVTSEAY…DLDNRGLSRT (232 aa). The segment at 525–527 is interacts with target acceptor peptide in protein substrate; it reads WWD. A WWDYG motif motif is present at residues 525-529; it reads WWDYG. Tyr530 is a binding site for dolichyl diphosphooligosaccharide. Asn537 and Asn544 each carry an N-linked (GlcNAc...) asparagine glycan. A glycan (N-linked (GlcNAc...) (high mannose) asparagine) is linked at Asn548. The DK motif signature appears at 592–599; that stretch reads DINKFLWM.

The protein belongs to the STT3 family. Component of the oligosaccharyltransferase (OST) complex. There are 2 OST complexes, OST-A and OST-B, which contain STT3A or STT3B as catalytic subunit, respectively. OST-A and OST-B contain common core subunits RPN1, RPN2, OST48, OST4, DAD1 and TMEM258, and OST-A contains DC2/OSTC and KRTCAP2/KCP2 specific accessory subunits. OST-A complex assembly occurs through the formation of 3 subcomplexes. Subcomplex 1 contains RPN1 and TMEM258, subcomplex 2 contains the OST-A-specific subunits STT3A, DC2/OSTC, and KCP2 as well as the core subunit OST4, and subcomplex 3 contains RPN2, DAD1, and OST48. The OST-A complex can form stable complexes with the Sec61 complex or with both the Sec61 and TRAP complexes. Mg(2+) is required as a cofactor. It depends on Mn(2+) as a cofactor.

Its subcellular location is the endoplasmic reticulum membrane. The enzyme catalyses a di-trans,poly-cis-dolichyl diphosphooligosaccharide + L-asparaginyl-[protein] = N(4)-(oligosaccharide-(1-&gt;4)-N-acetyl-beta-D-glucosaminyl-(1-&gt;4)-N-acetyl-beta-D-glucosaminyl)-L-asparaginyl-[protein] + a di-trans,poly-cis-dolichyl diphosphate + H(+). Its pathway is protein modification; protein glycosylation. Its function is as follows. Catalytic subunit of the oligosaccharyl transferase (OST) complex that catalyzes the initial transfer of a defined glycan (Glc(3)Man(9)GlcNAc(2) in eukaryotes) from the lipid carrier dolichol-pyrophosphate to an asparagine residue within an Asn-X-Ser/Thr consensus motif in nascent polypeptide chains, the first step in protein N-glycosylation. N-glycosylation occurs cotranslationally and the complex associates with the Sec61 complex at the channel-forming translocon complex that mediates protein translocation across the endoplasmic reticulum (ER). All subunits are required for a maximal enzyme activity. This subunit contains the active site and the acceptor peptide and donor lipid-linked oligosaccharide (LLO) binding pockets. STT3A is present in the majority of OST complexes and mediates cotranslational N-glycosylation of most sites on target proteins, while STT3B-containing complexes are required for efficient post-translational glycosylation and mediate glycosylation of sites that have been skipped by STT3A. STT3A-containing OST-A complex is also required to prevent hyperglycosylation of some target proteins by preventing glycosylation of facultative sites before folding of target proteins is completed. The sequence is that of Dolichyl-diphosphooligosaccharide--protein glycosyltransferase subunit STT3A from Canis lupus familiaris (Dog).